The primary structure comprises 209 residues: Chloramphenicol acetyltransferase (209 aa).

The active site involves His78.

Belongs to the transferase hexapeptide repeat family.

The enzyme catalyses chloramphenicol + acetyl-CoA = chloramphenicol 3-acetate + CoA. This enzyme is an effector of chloramphenicol resistance in bacteria. This is Chloramphenicol acetyltransferase (cat) from Agrobacterium fabrum (strain C58 / ATCC 33970) (Agrobacterium tumefaciens (strain C58)).